Reading from the N-terminus, the 678-residue chain is MTGPQQGKILLRLENVSREFITGEQTVRVLNNINLTLHSGEMVAIVGTSGSGKSTLMNILGCLDKPSAGEYWVAGRIPQYLGSDALAELRREHFGFIFQRYHLLNDLSARENVEIPAIYAGIDREERRKRAVNLLSRIGLAERLDYRPSQLSGGQQQRVSIARALMNGGDVILADEPTGALDTHSGNEVLNILKDLHQQGHTVVIVTHDMSIAEHAQRIIELKDGEIIADRPRDHAQEKPKMVDIPSVIDIPSMDEKISTGAQQETEIARKPLLTRWKVQYDRLHEAFKMAILAMAAQRLRTALTMLGIIIGIASVVSVVALGKGSQQQVLANINAMGTSTLEIFPGKDFGDMRSAAIHTLRDTDADVLAQQGYIHSVTPTVSTSVTLRYGNKSVSGTVNGVGEQYFLVRGYTIAQGMAFTRTSVNDLMQDAVIDENTRDKLFPNGETPLGKVILLGSLPCRVIGVAAKKQSGFGSDENLNVWIPYTTAMKRMLGQSYLKSITVRVNDDIDLANAEQGVIKLLSQRHGTQDFFVMNTDSIRQTIQATTSTMTLLVSMIAVISLIVGGIGVMNIMLVSVTERTKEIGVRMAVGARASDIMQQFLIEAVLVCLLGGSLGVALSLGIGLLFSLFSSNFSMVYSAASIITAFVCSSLIGVIFGFFPAKRAAEMDPIRALERE.

The ABC transporter domain maps to 11–249; sequence LRLENVSREF…PKMVDIPSVI (239 aa). 47–54 is an ATP binding site; sequence GTSGSGKS. The next 4 helical transmembrane spans lie at 303–323, 558–578, 608–628, and 641–661; these read ALTMLGIIIGIASVVSVVALG, IAVISLIVGGIGVMNIMLVSV, LVCLLGGSLGVALSLGIGLLF, and AASIITAFVCSSLIGVIFGFF.

This sequence belongs to the ABC transporter superfamily. Macrolide exporter (TC 3.A.1.122) family. In terms of assembly, homodimer. Part of the tripartite efflux system MacAB-TolC, which is composed of an inner membrane transporter, MacB, a periplasmic membrane fusion protein, MacA, and an outer membrane component, TolC. The complex forms a large protein conduit and can translocate molecules across both the inner and outer membranes. Interacts with MacA.

The protein resides in the cell inner membrane. In terms of biological role, part of the tripartite efflux system MacAB-TolC. MacB is a non-canonical ABC transporter that contains transmembrane domains (TMD), which form a pore in the inner membrane, and an ATP-binding domain (NBD), which is responsible for energy generation. Confers resistance against macrolides. This Yersinia pestis bv. Antiqua (strain Nepal516) protein is Macrolide export ATP-binding/permease protein MacB 1.